The sequence spans 123 residues: UPF0102 protein VFMJ11_2324 (123 aa).

This sequence belongs to the UPF0102 family.

This Aliivibrio fischeri (strain MJ11) (Vibrio fischeri) protein is UPF0102 protein VFMJ11_2324.